The following is a 420-amino-acid chain: Glucose-1-phosphate adenylyltransferase (420 aa).

Alpha-D-glucose 1-phosphate-binding positions include Tyr-107, Gly-173, 188-189 (EK), and Ser-206.

The protein belongs to the bacterial/plant glucose-1-phosphate adenylyltransferase family. As to quaternary structure, homotetramer.

It carries out the reaction alpha-D-glucose 1-phosphate + ATP + H(+) = ADP-alpha-D-glucose + diphosphate. Its pathway is glycan biosynthesis; glycogen biosynthesis. Involved in the biosynthesis of ADP-glucose, a building block required for the elongation reactions to produce glycogen. Catalyzes the reaction between ATP and alpha-D-glucose 1-phosphate (G1P) to produce pyrophosphate and ADP-Glc. This is Glucose-1-phosphate adenylyltransferase from Shewanella baltica (strain OS155 / ATCC BAA-1091).